The sequence spans 333 residues: CMP-N-acetylneuraminate-beta-galactosamide-alpha-2,3-sialyltransferase 4 (333 aa).

The Cytoplasmic portion of the chain corresponds to 1-8; sequence MVSKSRWK. The helical; Signal-anchor for type II membrane protein transmembrane segment at 9–26 threads the bilayer; it reads LLAMLALVLVVMVWYSIS. Residues 27-333 lie on the Lumenal side of the membrane; the sequence is REDRYIELFY…MGAIKNLTSF (307 aa). N-linked (GlcNAc...) asparagine glycosylation is found at N61, N131, N310, and N329. A disulfide bridge connects residues C120 and C273.

The protein belongs to the glycosyltransferase 29 family. The soluble form derives from the membrane form by proteolytic processing. Highly expressed in adult placenta, heart and kidney.

It localises to the golgi apparatus. It is found in the golgi stack membrane. Its subcellular location is the secreted. The catalysed reaction is a beta-D-galactosyl-(1-&gt;3)-N-acetyl-beta-D-galactosaminyl derivative + CMP-N-acetyl-beta-neuraminate = an N-acetyl-alpha-neuraminyl-(2-&gt;3)-beta-D-galactosyl-(1-&gt;3)-N-acetyl-beta-D-galactosaminyl derivative + CMP + H(+). The enzyme catalyses a beta-D-galactosyl-(1-&gt;3)-N-acetyl-alpha-D-galactosaminyl derivative + CMP-N-acetyl-beta-neuraminate = an N-acetyl-alpha-neuraminyl-(2-&gt;3)-beta-D-galactosyl-(1-&gt;3)-N-acetyl-alpha-D-galactosaminyl derivative + CMP + H(+). It carries out the reaction a beta-D-galactosyl-(1-&gt;4)-N-acetyl-beta-D-glucosaminyl derivative + CMP-N-acetyl-beta-neuraminate = an N-acetyl-alpha-neuraminyl-(2-&gt;3)-beta-D-galactosyl-(1-&gt;4)-N-acetyl-beta-D-glucosaminyl derivative + CMP + H(+). It catalyses the reaction a ganglioside GM1 (d18:1(4E)) + CMP-N-acetyl-beta-neuraminate = a ganglioside GD1a (d18:1(4E)) + CMP + H(+). The catalysed reaction is a ganglioside GA1 (d18:1(4E)) + CMP-N-acetyl-beta-neuraminate = a ganglioside GM1b (d18:1(4E)) + CMP + H(+). The enzyme catalyses a ganglioside GT1c (d18:1(4E)) + CMP-N-acetyl-beta-neuraminate = a ganglioside GQ1c (d18:1(4E)) + CMP + H(+). It carries out the reaction a neolactoside nLc4Cer + CMP-N-acetyl-beta-neuraminate = a neolactoside IV(3)-alpha-NeuAc-nLc4Cer + CMP + H(+). It catalyses the reaction a neolactoside nLc4Cer(d18:1(4E)) + CMP-N-acetyl-beta-neuraminate = a neolactoside IV(3)-alpha-NeuAc-nLc4Cer(d18:1(4E)) + CMP + H(+). It participates in protein modification; protein glycosylation. Its pathway is glycolipid biosynthesis. Functionally, a beta-galactoside alpha2-3 sialyltransferase involved in terminal sialylation of glycoproteins and glycolipids. Catalyzes the transfer of sialic acid (N-acetyl-neuraminic acid; Neu5Ac) from the nucleotide sugar donor CMP-Neu5Ac onto acceptor Galbeta-(1-&gt;3)-GalNAc- and Galbeta-(1-&gt;4)-GlcNAc-terminated glycoconjugates through an alpha2-3 linkage. Plays a major role in hemostasis. Responsible for sialylation of plasma VWF/von Willebrand factor, preventing its recognition by asialoglycoprotein receptors (ASGPR) and subsequent clearance. Regulates ASGPR-mediated clearance of platelets. Participates in the biosynthesis of the sialyl Lewis X epitopes, both on O- and N-glycans, which are recognized by SELE/E-selectin, SELP/P-selectin and SELL/L-selectin. Essential for selectin-mediated rolling and adhesion of leukocytes during extravasation. Contributes to adhesion and transendothelial migration of neutrophils likely through terminal sialylation of CXCR2. In glycosphingolipid biosynthesis, sialylates GM1 and GA1 gangliosides to form GD1a and GM1b, respectively. Metabolizes brain c-series ganglioside GT1c forming GQ1c. Synthesizes ganglioside LM1 (IV3Neu5Ac-nLc4Cer), a major structural component of peripheral nerve myelin. This is CMP-N-acetylneuraminate-beta-galactosamide-alpha-2,3-sialyltransferase 4 (ST3GAL4) from Homo sapiens (Human).